The sequence spans 610 residues: GPI transamidase component GPI16 (610 aa).

Residues 1–19 (MILTLAYFMLGTLLLGVFA) form the signal peptide. At 20–551 (EDTVSQIGIN…STPDFSMPYN (532 aa)) the chain is on the lumenal side. A glycan (N-linked (GlcNAc...) asparagine) is linked at asparagine 184. The chain crosses the membrane as a helical span at residues 552-572 (VIILTSTIMGLIFGMLYNLMV). Residues 573–610 (KRMVTVEEADKITLQSGLKYKLLKLKEKFLGKKKTKTD) are Cytoplasmic-facing.

This sequence belongs to the PIGT family. Forms a complex with CDC91, GPI17, GPI8 and GAA1. Post-translationally, the disulfide bond between GPI8 and GPI16 is important for normal enzyme activity.

Its subcellular location is the endoplasmic reticulum membrane. The protein operates within glycolipid biosynthesis; glycosylphosphatidylinositol-anchor biosynthesis. Functionally, component of the GPI transamidase complex. Involved in transfer of GPI to proteins. This is GPI transamidase component GPI16 (GPI16) from Saccharomyces cerevisiae (strain ATCC 204508 / S288c) (Baker's yeast).